The sequence spans 231 residues: MKEITINIDKIKINDDWKEFLRDEFQKKYFLEIKKQYLNAINQNIIIYPPANLIFNAFNLCPLKEIKIVILGQDPYHQENQAMGLSFSVPKNVKIPPSLNNIFKELQNDLNITPAKSGDLSFWAKQGVLLLNSILSVEANKAASHSSWGWQEFSDAVIHKLSNEKSGLVFMLWGNYAKSKEILIDNTKHLILKAAHPSPLARTGFLGCKHFSKANEFLKKVGKIPIDWKIV.

Catalysis depends on Asp-74, which acts as the Proton acceptor.

Belongs to the uracil-DNA glycosylase (UDG) superfamily. UNG family.

It localises to the cytoplasm. It carries out the reaction Hydrolyzes single-stranded DNA or mismatched double-stranded DNA and polynucleotides, releasing free uracil.. Its function is as follows. Excises uracil residues from the DNA which can arise as a result of misincorporation of dUMP residues by DNA polymerase or due to deamination of cytosine. This is Uracil-DNA glycosylase from Campylobacter jejuni subsp. doylei (strain ATCC BAA-1458 / RM4099 / 269.97).